Consider the following 491-residue polypeptide: Cytochrome P450 2B4 (491 aa).

Serine 128 carries the post-translational modification Phosphoserine; by PKA. Position 436 (cysteine 436) interacts with heme.

It belongs to the cytochrome P450 family. Heme is required as a cofactor.

The protein localises to the endoplasmic reticulum membrane. The protein resides in the microsome membrane. The enzyme catalyses an organic molecule + reduced [NADPH--hemoprotein reductase] + O2 = an alcohol + oxidized [NADPH--hemoprotein reductase] + H2O + H(+). Its function is as follows. Cytochromes P450 are a group of heme-thiolate monooxygenases. In liver microsomes, this enzyme is involved in an NADPH-dependent electron transport pathway. It oxidizes a variety of structurally unrelated compounds, including steroids, fatty acids, and xenobiotics. In the epoxidation of arachidonic acid it has a unique preference for the 5,6-olefin. The polypeptide is Cytochrome P450 2B4 (CYP2B4) (Oryctolagus cuniculus (Rabbit)).